Consider the following 561-residue polypeptide: MSKDNIRQYSAPVYDGIENAPARSMMRAVGFQDKDFNRPFIGIASTWANVTPCNMHIDGLAREAEHGVNQASGKGIIFNTITISDGISNGTEGMKYSLVSREIIADSIEAVIGCQGYDGVIAIGGCDKNMPGCIMGLARLNRPGLFIYGGTIQPGEGHTDMISVFEAVGQYAKGEINAIQVKQIEEVALPGPGSCGGMYTANTMASAIEALGMSLPGSSAQDAISEEKRQDCHRAGEAVMNLLRLDIRPRDIMTKAAFENAIKVVIALGGSTNAVLHLIAMAHTAEVKLDLDDFVRIGQETPVVADLRPSGKYLMSELIKIGGIQPLMKRMLERGMLDGSCLTVTGKTLAENLAEVEDYPADQQIILPFEQPVKKDSHLVILKGNLSPTGAVAKITGKEGLYFEGPARVFEGEEGAMRGILDGEVQEGEVVVIRGEGPKGGPGMREMLKPTSAIIGKGLGQSVALITDGRFSGGSHGFVIGHVTPEAYEGGPIGLVENGDKISINAETREITLHISNEEMSLRRAKWQKPEPKYKSGALAKFAKLAAGADKGAVTDLNLDV.

Cys-53 contacts [2Fe-2S] cluster. Asp-85 lines the Mg(2+) pocket. Position 126 (Cys-126) interacts with [2Fe-2S] cluster. Mg(2+) contacts are provided by Asp-127 and Lys-128. An N6-carboxylysine modification is found at Lys-128. Position 195 (Cys-195) interacts with [2Fe-2S] cluster. Glu-446 is a binding site for Mg(2+). Ser-472 acts as the Proton acceptor in catalysis.

It belongs to the IlvD/Edd family. As to quaternary structure, homodimer. Requires [2Fe-2S] cluster as cofactor. Mg(2+) is required as a cofactor.

It catalyses the reaction (2R)-2,3-dihydroxy-3-methylbutanoate = 3-methyl-2-oxobutanoate + H2O. The enzyme catalyses (2R,3R)-2,3-dihydroxy-3-methylpentanoate = (S)-3-methyl-2-oxopentanoate + H2O. It functions in the pathway amino-acid biosynthesis; L-isoleucine biosynthesis; L-isoleucine from 2-oxobutanoate: step 3/4. It participates in amino-acid biosynthesis; L-valine biosynthesis; L-valine from pyruvate: step 3/4. Functionally, functions in the biosynthesis of branched-chain amino acids. Catalyzes the dehydration of (2R,3R)-2,3-dihydroxy-3-methylpentanoate (2,3-dihydroxy-3-methylvalerate) into 2-oxo-3-methylpentanoate (2-oxo-3-methylvalerate) and of (2R)-2,3-dihydroxy-3-methylbutanoate (2,3-dihydroxyisovalerate) into 2-oxo-3-methylbutanoate (2-oxoisovalerate), the penultimate precursor to L-isoleucine and L-valine, respectively. The polypeptide is Dihydroxy-acid dehydratase 2 (Acinetobacter baylyi (strain ATCC 33305 / BD413 / ADP1)).